The primary structure comprises 306 residues: Beta-lactamase (306 aa).

An N-terminal signal peptide occupies residues 1-34; that stretch reads MNVKRKATLKFGICIGLLCVSFTGFNSLFGSTHA. Catalysis depends on S89, which acts as the Acyl-ester intermediate. 251–253 contributes to the substrate binding site; that stretch reads KSG.

Belongs to the class-A beta-lactamase family.

The enzyme catalyses a beta-lactam + H2O = a substituted beta-amino acid. Its function is as follows. This protein is a beta-lactamase with a substrate specificity for penicillins. In Bacillus amyloliquefaciens (Bacillus velezensis), this protein is Beta-lactamase (penP).